Here is a 304-residue protein sequence, read N- to C-terminus: Glycosyltransferase AglE (304 aa).

It belongs to the glycosyltransferase 2 family.

It is found in the cell membrane. Its pathway is cell surface structure biogenesis; S-layer biogenesis. Functionally, involved in the assembly of a N-linked pentasaccharide that decorates the S-layer glycoprotein and flagellins. Catalyzes the addition to the dolichol phosphate carrier of the hexuronic acid found at position 4 of the pentasaccharide. The sequence is that of Glycosyltransferase AglE (aglE) from Haloferax volcanii (strain ATCC 29605 / DSM 3757 / JCM 8879 / NBRC 14742 / NCIMB 2012 / VKM B-1768 / DS2) (Halobacterium volcanii).